The chain runs to 1032 residues: Putative oxidoreductase YgfK (1032 aa).

The 31-residue stretch at 928–958 folds into the 4Fe-4S ferredoxin-type domain; the sequence is RFQTLHLDAYCNECGNCAQFCPWNGKPYKDK. Cysteine 938, cysteine 941, cysteine 944, and cysteine 948 together coordinate [4Fe-4S] cluster.

It depends on [4Fe-4S] cluster as a cofactor.

Its function is as follows. Could be an iron-sulfur flavoprotein with NADPH:O(2) oxidoreductase activity. The sequence is that of Putative oxidoreductase YgfK (ygfK) from Escherichia coli O157:H7.